A 259-amino-acid chain; its full sequence is Early E4 30 kDa protein (259 aa).

This sequence belongs to the adenoviridae E4 30 to 34 kDa protein family. As to quaternary structure, interacts with E1B-55k.

Its subcellular location is the host nucleus. It localises to the host cytoplasm. Its function is as follows. Plays a major role to prevent cellular inhibition of viral genome replication by nuclear bodies. Assembles an SCF-like E3 ubiquitin ligase complex based on the cellular proteins ELOB, ELOC, CUL5 and RBX1, in cooperation with viral E1B-55K. This viral RING-type ligase ubiquitinates cellular substrates prior to proteasomal degradation: p53/TP53, LIG4, MRE11-RAD50-NBS1 (MRN) complex, ITGA3, DAXX and BLM. The chain is Early E4 30 kDa protein from Canine adenovirus serotype 2 (strain Toronto A 26-61) (CAdV-2).